The chain runs to 1341 residues: Restriction of telomere capping protein 1 (1341 aa).

Residues 1–39 (MSLSPHVENASIPKGSTPIPKNRNVSSIGKGEFLGSSSS) form a disordered region. WD repeat units follow at residues 207–248 (NKFS…SIDN), 256–296 (EHTR…SKSS), 305–342 (TASD…YKFA), 367–406 (AHTG…NAAE), 439–486 (NTGY…IPKH), and 489–527 (LSET…TVLE). Disordered regions lie at residues 559–593 (PELQ…IGGI), 600–619 (TGLT…GPTF), 630–651 (ASSF…ENRE), 736–765 (KNAT…DDDD), and 789–830 (NEKV…DRAR). The segment covering 630–644 (ASSFNSSSASLTSLT) has biased composition (low complexity). Residues 753–765 (DDGDDDDDDDDDD) show a composition bias toward acidic residues. Positions 814-823 (SSISSISASR) are enriched in low complexity. A WD 7 repeat occupies 843-883 (KIQTLVDLISIATHNASVYLSIDDLTNFKIWILIRDSLLWD). Disordered regions lie at residues 941-962 (AFRA…KLKE) and 1013-1043 (DEHE…KSIP). Composition is skewed to basic and acidic residues over residues 951 to 962 (DAEKKPVSKLKE) and 1015 to 1027 (HEHQ…HDSP). Residues Ser-1036, Ser-1080, Ser-1087, Ser-1089, Ser-1123, and Ser-1133 each carry the phosphoserine modification. WD repeat units lie at residues 1129-1169 (SRPD…KQLY) and 1216-1255 (LFGI…LITN). The RING-type; degenerate zinc-finger motif lies at 1293 to 1335 (CVLCERPLKKLTMVILPCGHEGHFQCIQEWFLDENEQECPGGC).

The protein belongs to the WD repeat RTC1 family. As to quaternary structure, component of the SEA complex composed of at least IML1/SEA1, RTC1/SEA2, MTC5/SEA3, NPR2, NPR3, SEA4, SEC13 and SEH1. Interacts with ribosomes.

It localises to the vacuole membrane. Component of the SEA complex which coats the vacuolar membrane and is involved in intracellular trafficking, autophagy, response to nitrogen starvation, and amino acid biogenesis. May be involved in a process influencing telomere capping. The protein is Restriction of telomere capping protein 1 (RTC1) of Saccharomyces cerevisiae (strain ATCC 204508 / S288c) (Baker's yeast).